We begin with the raw amino-acid sequence, 162 residues long: MIRIGHGFDVHAFGGEGPIIIGGVAIPYEKGLVAHSDGDVALHALTDALLGAMALGDIGKLFPDTDIQYKGADSRRLLRTAYQAILDKGYQVGNVDITIIAQAPKMRPYIDSMRTVIAQDLHCDIEQVNVKATTTEKLGFTGRSEGIACEAVVLLIKQNGTK.

A divalent metal cation contacts are provided by D9 and H11. 4-CDP-2-C-methyl-D-erythritol 2-phosphate-binding positions include D9–H11 and H35–S36. Residue H43 participates in a divalent metal cation binding. 4-CDP-2-C-methyl-D-erythritol 2-phosphate is bound by residues D57–G59, F62–D66, T133–E136, F140, and R143.

This sequence belongs to the IspF family. In terms of assembly, homotrimer. It depends on a divalent metal cation as a cofactor.

It catalyses the reaction 4-CDP-2-C-methyl-D-erythritol 2-phosphate = 2-C-methyl-D-erythritol 2,4-cyclic diphosphate + CMP. It participates in isoprenoid biosynthesis; isopentenyl diphosphate biosynthesis via DXP pathway; isopentenyl diphosphate from 1-deoxy-D-xylulose 5-phosphate: step 4/6. Its function is as follows. Involved in the biosynthesis of isopentenyl diphosphate (IPP) and dimethylallyl diphosphate (DMAPP), two major building blocks of isoprenoid compounds. Catalyzes the conversion of 4-diphosphocytidyl-2-C-methyl-D-erythritol 2-phosphate (CDP-ME2P) to 2-C-methyl-D-erythritol 2,4-cyclodiphosphate (ME-CPP) with a corresponding release of cytidine 5-monophosphate (CMP). The sequence is that of 2-C-methyl-D-erythritol 2,4-cyclodiphosphate synthase from Histophilus somni (strain 2336) (Haemophilus somnus).